We begin with the raw amino-acid sequence, 225 residues long: PKHD-type hydroxylase YbiX (225 aa).

Residues 78–177 enclose the Fe2OG dioxygenase domain; it reads TLSTPLFNRY…RVASFMWIQS (100 aa). 3 residues coordinate Fe cation: histidine 96, aspartate 98, and histidine 158. A 2-oxoglutarate-binding site is contributed by arginine 168.

Fe(2+) serves as cofactor. The cofactor is L-ascorbate.

This is PKHD-type hydroxylase YbiX from Escherichia fergusonii (strain ATCC 35469 / DSM 13698 / CCUG 18766 / IAM 14443 / JCM 21226 / LMG 7866 / NBRC 102419 / NCTC 12128 / CDC 0568-73).